Consider the following 469-residue polypeptide: UDP-N-acetylmuramate--L-alanine ligase (469 aa).

ATP is bound at residue 113-119; the sequence is GTHGKTT.

Belongs to the MurCDEF family.

It is found in the cytoplasm. The enzyme catalyses UDP-N-acetyl-alpha-D-muramate + L-alanine + ATP = UDP-N-acetyl-alpha-D-muramoyl-L-alanine + ADP + phosphate + H(+). Its pathway is cell wall biogenesis; peptidoglycan biosynthesis. Functionally, cell wall formation. The polypeptide is UDP-N-acetylmuramate--L-alanine ligase (Neisseria meningitidis serogroup B (strain ATCC BAA-335 / MC58)).